We begin with the raw amino-acid sequence, 493 residues long: Lysine--tRNA ligase (493 aa).

Positions 26–34 match the 'HIGH' region motif; sequence PSGHIHLGN. The 'KMSKS' region signature appears at 270–274; the sequence is AMKSS.

This sequence belongs to the class-I aminoacyl-tRNA synthetase family.

It is found in the cytoplasm. The catalysed reaction is tRNA(Lys) + L-lysine + ATP = L-lysyl-tRNA(Lys) + AMP + diphosphate. The polypeptide is Lysine--tRNA ligase (lysS) (Archaeoglobus fulgidus (strain ATCC 49558 / DSM 4304 / JCM 9628 / NBRC 100126 / VC-16)).